A 476-amino-acid polypeptide reads, in one-letter code: MTWETVIGLEIHVQLNTKSKIFSGASTAFGAEPNAHASVVECALPGVLPVMNREVVEKAIKLGLALDAKINRKNVFDRKNYFYPDLPKGYQISQLDLPIVEHGKLEIVVGDDVKTINVTRAHMEEDAGKSVHEGLNGATGIDLNRAGTPLLEVVSEPELRSAAEAVAYAKALHSLVTWLDICDGNMAEGSFRVDANVSVRPKGQAEFGTRREIKNLNSFRFLEQAINYEAEAQIEILEDGSKVQQATMLFDPEKGETRVMRLKEDAQDYRYFPDPDLLPVIISDAQMQKAKAEMPELPKEMAARFVADYGVSEYDARLLTASRAQAAYFEEAAKASGQGKPTANWMNGELAAALNKAGLELADSPITAPRLAALVGKIADGTLSSKLAKKAFEAMWAEPESTIAEIIEKHGLQQMTDTGAVEAMVDEVLANNAKAVEQFKSGNEKALNAIVGQVMKASKGKANPAQVQELIKAKLA.

It belongs to the GatB/GatE family. GatB subfamily. As to quaternary structure, heterotrimer of A, B and C subunits.

It carries out the reaction L-glutamyl-tRNA(Gln) + L-glutamine + ATP + H2O = L-glutaminyl-tRNA(Gln) + L-glutamate + ADP + phosphate + H(+). The enzyme catalyses L-aspartyl-tRNA(Asn) + L-glutamine + ATP + H2O = L-asparaginyl-tRNA(Asn) + L-glutamate + ADP + phosphate + 2 H(+). Its function is as follows. Allows the formation of correctly charged Asn-tRNA(Asn) or Gln-tRNA(Gln) through the transamidation of misacylated Asp-tRNA(Asn) or Glu-tRNA(Gln) in organisms which lack either or both of asparaginyl-tRNA or glutaminyl-tRNA synthetases. The reaction takes place in the presence of glutamine and ATP through an activated phospho-Asp-tRNA(Asn) or phospho-Glu-tRNA(Gln). The chain is Aspartyl/glutamyl-tRNA(Asn/Gln) amidotransferase subunit B from Neisseria meningitidis serogroup C / serotype 2a (strain ATCC 700532 / DSM 15464 / FAM18).